Consider the following 235-residue polypeptide: Small ribosomal subunit protein uS2c (235 aa).

Belongs to the universal ribosomal protein uS2 family.

The protein localises to the plastid. Its subcellular location is the chloroplast. The protein is Small ribosomal subunit protein uS2c (rps2) of Huperzia lucidula (Shining clubmoss).